The primary structure comprises 412 residues: MNAEIIAVGTELLLGQIANTNAQFLSEKLASIGINVYYHTVVGDNNKRLQQAIEVAEGRADMLIFTGGLGPTKDDLTKETIASSLAEELVYDEKALASISDYFKRTGREFTENNKKQALVLDGATVFANDHGMAPGMGLNKNGKVYILLPGPPKEMKPMYVSYVEPFLRNFTTGENIYSRVLRFFGIGESQLEVKVQDLIDGQTNPTIAPLANDGEVTLRLTAKHQNVDEAEKLIQHVEDLILERVGEFFYGYDQEFLHDKAIELLKKKGLTLSCAESLTGGLFGNQVTESAGVSSVFKGGVICYHNDVKQHVLHVPEEVLFTDGAVSKECARYLAENVKELLEADIGISFTGVAGPDASEHKEPGTVFVGLAIKDEPTVVFPLNLSGSRQQIRERSAKYGFYHLYKKLEEI.

The protein belongs to the CinA family.

The protein is Putative competence-damage inducible protein of Bacillus thuringiensis (strain Al Hakam).